We begin with the raw amino-acid sequence, 259 residues long: Thiazole synthase (259 aa).

Residue K99 is the Schiff-base intermediate with DXP of the active site. 1-deoxy-D-xylulose 5-phosphate is bound by residues G161, 187 to 188, and 209 to 219; these read AG and NSAIACAQNPI.

This sequence belongs to the ThiG family. As to quaternary structure, homotetramer. Forms heterodimers with either ThiH or ThiS.

The protein localises to the cytoplasm. The enzyme catalyses [ThiS sulfur-carrier protein]-C-terminal-Gly-aminoethanethioate + 2-iminoacetate + 1-deoxy-D-xylulose 5-phosphate = [ThiS sulfur-carrier protein]-C-terminal Gly-Gly + 2-[(2R,5Z)-2-carboxy-4-methylthiazol-5(2H)-ylidene]ethyl phosphate + 2 H2O + H(+). Its pathway is cofactor biosynthesis; thiamine diphosphate biosynthesis. Catalyzes the rearrangement of 1-deoxy-D-xylulose 5-phosphate (DXP) to produce the thiazole phosphate moiety of thiamine. Sulfur is provided by the thiocarboxylate moiety of the carrier protein ThiS. In vitro, sulfur can be provided by H(2)S. This Aliarcobacter butzleri (strain RM4018) (Arcobacter butzleri) protein is Thiazole synthase.